The following is a 569-amino-acid chain: Ribosome-inactivating protein SNAI' (569 aa).

Residues 1–28 form the signal peptide; sequence MKVVATILYLVVLAICGLGIHGAHPTHS. Residue asparagine 40 is glycosylated (N-linked (GlcNAc...) asparagine). The active site involves glutamate 201. 3 disulfides stabilise this stretch: cysteine 286-cysteine 311, cysteine 328-cysteine 347, and cysteine 369-cysteine 381. Ricin B-type lectin domains follow at residues 315 to 435 and 437 to 565; these read EEVT…WIVG and VEPL…WIAS. The stretch at 325–365 is one 1-alpha repeat; the sequence is DGFCAEVKNGDEKDGTPVQLSSCGEQSNQQWTFSTDGTIQS. One copy of the 1-beta repeat lies at 366-401; the sequence is LGKCLTTSSSVMIYNCKVVPPESTKWVVSIDGTITN. A 1-gamma repeat occupies 404–436; the sequence is SGLVLTAPKAAEGTLVSLEKNVHAARQGWIVGN. A 2-alpha repeat occupies 448–488; sequence EQMCLETNPGNNDVSLGDCSVKSASKVDQKWALYGDGTIRV. 2 disulfides stabilise this stretch: cysteine 451–cysteine 466 and cysteine 495–cysteine 512. One copy of the 2-beta repeat lies at 492 to 530; the sequence is RSLCVTSEGKSSNEPIIILKCLGWANQRWVFNTDGTISN. Residues 533–566 form a 2-gamma repeat; it reads SKLVMHVDQNDVPLRKIILSHPSGTSNQQWIAST.

The protein in the N-terminal section; belongs to the ribosome-inactivating protein family. Type 2 RIP subfamily. In terms of assembly, disulfide-linked dimer of A and B chains.

It catalyses the reaction Endohydrolysis of the N-glycosidic bond at one specific adenosine on the 28S rRNA.. In terms of biological role, the A chain is responsible for inhibiting protein synthesis through the catalytic inactivation of 60S ribosomal subunits by removing adenine from position 4,324 of 28S rRNA. The B chain binds to cell receptors and probably facilitates the entry into the cell of the A chain; B chains are also responsible for cell agglutination (lectin activity). Agglutination is inhibited by Neu5Ac(alpha2,6)lactose, and N-linked glycoproteins such as fetuin and orosomucoid. This chain is Ribosome-inactivating protein SNAI', found in Sambucus nigra (European elder).